The sequence spans 231 residues: NADH-ubiquinone oxidoreductase chain 4 (231 aa).

7 consecutive transmembrane segments (helical) span residues 1–21, 34–54, 63–85, 89–111, 128–148, 169–189, and 211–231; these read PIAGSMVLAAVLLKLGGYGII, MFLPFIVLALWGAILANLTCL, IAYSSISHMGLVVAAIIIQTPWG, AMALMIAHGFTSSALFCLANTTY, ILPMTTTWWLLANLMNIATPP, TIILLGLSMLITASYSLHMFL, and LLMALHLVPLMMISMKPELII.

This sequence belongs to the complex I subunit 4 family.

The protein resides in the mitochondrion membrane. The enzyme catalyses a ubiquinone + NADH + 5 H(+)(in) = a ubiquinol + NAD(+) + 4 H(+)(out). Functionally, core subunit of the mitochondrial membrane respiratory chain NADH dehydrogenase (Complex I) that is believed to belong to the minimal assembly required for catalysis. Complex I functions in the transfer of electrons from NADH to the respiratory chain. The immediate electron acceptor for the enzyme is believed to be ubiquinone. The chain is NADH-ubiquinone oxidoreductase chain 4 (MT-ND4) from Cerrophidion godmani (Porthidium godmani).